A 307-amino-acid polypeptide reads, in one-letter code: MDTTPDNSEKKKTSSVREATFSINESFGGRLLTEEEDVFEQNAWDHVEWDDEHLALAKKCIEEQKLYPVTEKDAYMTHPERYWDQFYGKNEGKFFMNRRWIAQEFPELLDLLKEDAGEKSILEIGCGAGNTIWPILKENKNSNLKIFAVDYSEKAIDVVKQNPLYDAKFCSASVWDLAGSDLLRSIEEASIDAITLIFCFSALSPDQWQQAIENLYRLLKPGGLILFRDYGRLDLTQLRAKKNRILSENFYIRGDGTRVYYMTNEELVDVFGKNFKIIQNGVDKRLIVNRKKRVKMYRCWLQAKFQK.

The S-adenosyl-L-methionine site is built by Trp83, Tyr87, Gly125, Asp150, Asp176, Leu177, and Ile197.

It belongs to the methyltransferase superfamily. METL family.

It catalyses the reaction cytidine(32) in tRNA(Thr) + S-adenosyl-L-methionine = N(3)-methylcytidine(32) in tRNA(Thr) + S-adenosyl-L-homocysteine + H(+). Functionally, S-adenosyl-L-methionine-dependent methyltransferase that mediates N(3)-methylcytidine modification of residue 32 of the tRNA anticodon loop of tRNA(Thr). Does not catalyze N(3)-methylcytidine modification of tRNA(Ser). The polypeptide is tRNA N(3)-methylcytidine methyltransferase trm140 (Schizosaccharomyces pombe (strain 972 / ATCC 24843) (Fission yeast)).